A 509-amino-acid chain; its full sequence is 2,3-bisphosphoglycerate-independent phosphoglycerate mutase (509 aa).

Residues aspartate 12 and serine 62 each contribute to the Mn(2+) site. Serine 62 functions as the Phosphoserine intermediate in the catalytic mechanism. Residues histidine 123, arginine 153–aspartate 154, arginine 185, arginine 191, arginine 260–arginine 263, and lysine 333 contribute to the substrate site. Mn(2+) contacts are provided by aspartate 400, histidine 404, aspartate 441, histidine 442, and histidine 460.

Belongs to the BPG-independent phosphoglycerate mutase family. As to quaternary structure, monomer. It depends on Mn(2+) as a cofactor.

The catalysed reaction is (2R)-2-phosphoglycerate = (2R)-3-phosphoglycerate. The protein operates within carbohydrate degradation; glycolysis; pyruvate from D-glyceraldehyde 3-phosphate: step 3/5. Catalyzes the interconversion of 2-phosphoglycerate and 3-phosphoglycerate. The sequence is that of 2,3-bisphosphoglycerate-independent phosphoglycerate mutase from Clostridium botulinum (strain Langeland / NCTC 10281 / Type F).